The chain runs to 333 residues: Tetraacyldisaccharide 4'-kinase (333 aa).

Residue 60–67 participates in ATP binding; it reads TVGGTGKT.

Belongs to the LpxK family.

It carries out the reaction a lipid A disaccharide + ATP = a lipid IVA + ADP + H(+). It functions in the pathway glycolipid biosynthesis; lipid IV(A) biosynthesis; lipid IV(A) from (3R)-3-hydroxytetradecanoyl-[acyl-carrier-protein] and UDP-N-acetyl-alpha-D-glucosamine: step 6/6. Transfers the gamma-phosphate of ATP to the 4'-position of a tetraacyldisaccharide 1-phosphate intermediate (termed DS-1-P) to form tetraacyldisaccharide 1,4'-bis-phosphate (lipid IVA). The polypeptide is Tetraacyldisaccharide 4'-kinase (Pseudomonas putida (strain GB-1)).